Here is a 572-residue protein sequence, read N- to C-terminus: Proline--tRNA ligase (572 aa).

It belongs to the class-II aminoacyl-tRNA synthetase family. ProS type 1 subfamily. In terms of assembly, homodimer.

It localises to the cytoplasm. The enzyme catalyses tRNA(Pro) + L-proline + ATP = L-prolyl-tRNA(Pro) + AMP + diphosphate. Its function is as follows. Catalyzes the attachment of proline to tRNA(Pro) in a two-step reaction: proline is first activated by ATP to form Pro-AMP and then transferred to the acceptor end of tRNA(Pro). As ProRS can inadvertently accommodate and process non-cognate amino acids such as alanine and cysteine, to avoid such errors it has two additional distinct editing activities against alanine. One activity is designated as 'pretransfer' editing and involves the tRNA(Pro)-independent hydrolysis of activated Ala-AMP. The other activity is designated 'posttransfer' editing and involves deacylation of mischarged Ala-tRNA(Pro). The misacylated Cys-tRNA(Pro) is not edited by ProRS. The protein is Proline--tRNA ligase of Alteromonas mediterranea (strain DSM 17117 / CIP 110805 / LMG 28347 / Deep ecotype).